The chain runs to 115 residues: Large ribosomal subunit protein uL24 (115 aa).

Disordered regions lie at residues 45-77 and 96-115; these read VRQS…STGK and KASG…KAAS.

It belongs to the universal ribosomal protein uL24 family. As to quaternary structure, part of the 50S ribosomal subunit.

Its function is as follows. One of two assembly initiator proteins, it binds directly to the 5'-end of the 23S rRNA, where it nucleates assembly of the 50S subunit. Functionally, one of the proteins that surrounds the polypeptide exit tunnel on the outside of the subunit. This is Large ribosomal subunit protein uL24 from Rhodopirellula baltica (strain DSM 10527 / NCIMB 13988 / SH1).